The following is a 451-amino-acid chain: uncharacterized protein (451 aa).

Positions 1–22 are cleaved as a signal peptide; the sequence is MKLKLIFSLFLVLVFCSLFVFG. N-linked (GlcNAc...) asparagine glycosylation is found at Asn25, Asn45, Asn209, Asn326, and Asn402.

The protein localises to the secreted. This is an uncharacterized protein from Dictyostelium discoideum (Social amoeba).